The primary structure comprises 256 residues: Imidazole glycerol phosphate synthase subunit HisF (256 aa).

Catalysis depends on residues D11 and D130.

Belongs to the HisA/HisF family. Heterodimer of HisH and HisF.

The protein localises to the cytoplasm. It catalyses the reaction 5-[(5-phospho-1-deoxy-D-ribulos-1-ylimino)methylamino]-1-(5-phospho-beta-D-ribosyl)imidazole-4-carboxamide + L-glutamine = D-erythro-1-(imidazol-4-yl)glycerol 3-phosphate + 5-amino-1-(5-phospho-beta-D-ribosyl)imidazole-4-carboxamide + L-glutamate + H(+). Its pathway is amino-acid biosynthesis; L-histidine biosynthesis; L-histidine from 5-phospho-alpha-D-ribose 1-diphosphate: step 5/9. Its function is as follows. IGPS catalyzes the conversion of PRFAR and glutamine to IGP, AICAR and glutamate. The HisF subunit catalyzes the cyclization activity that produces IGP and AICAR from PRFAR using the ammonia provided by the HisH subunit. The sequence is that of Imidazole glycerol phosphate synthase subunit HisF from Cupriavidus pinatubonensis (strain JMP 134 / LMG 1197) (Cupriavidus necator (strain JMP 134)).